Here is a 336-residue protein sequence, read N- to C-terminus: Atypical chemokine receptor 1 (336 aa).

At 1 to 63 (MGNCLHPAEL…CNLLDDSALP (63 aa)) the chain is on the extracellular side. N-linked (GlcNAc...) asparagine glycosylation is found at asparagine 16, asparagine 27, and asparagine 33. Disulfide bonds link cysteine 51–cysteine 276 and cysteine 129–cysteine 195. Residues 64–84 (FFILVSVLGILASGIVLFMFF) form a helical membrane-spanning segment. The Cytoplasmic segment spans residues 85-95 (RPLFHWQLCPG). A helical transmembrane segment spans residues 96 to 116 (WPVLAQLAVGSALFSIVVPIL). The Extracellular segment spans residues 117-129 (APGLGNTRSSALC). The chain crosses the membrane as a helical span at residues 130–153 (SLGYCVWYGSAFAQALLLGCHASL). The Cytoplasmic segment spans residues 154-166 (GPKLGADQVPGLT). Residues 167-187 (LGLSVGLWGVAALLTLPVTLA) form a helical membrane-spanning segment. Residues 188 to 207 (SGASGGLCTPVYSMELKALQ) are Extracellular-facing. Residues 208–228 (ATHAVACLAIFVLLPLGLFGA) traverse the membrane as a helical segment. Residues 229–244 (KGLKKALGMGPGPWMN) lie on the Cytoplasmic side of the membrane. A helical transmembrane segment spans residues 245-265 (ILWAWFIFWWPHGVVLGLDFL). The Extracellular portion of the chain corresponds to 266–287 (VRSKLLLLSTCLAQQALDLLLN). Residues 288–308 (LAEALAILHCVATPLLLALFC) form a helical membrane-spanning segment. The Cytoplasmic portion of the chain corresponds to 309–336 (HQATRTLLPSLPLPEGWSSHLDTLGSKS).

The protein belongs to the G-protein coupled receptor 1 family. Atypical chemokine receptor subfamily.

The protein resides in the early endosome. The protein localises to the recycling endosome. It is found in the membrane. Its function is as follows. Atypical chemokine receptor that controls chemokine levels and localization via high-affinity chemokine binding that is uncoupled from classic ligand-driven signal transduction cascades, resulting instead in chemokine sequestration, degradation, or transcytosis. Also known as interceptor (internalizing receptor) or chemokine-scavenging receptor or chemokine decoy receptor. Has a promiscuous chemokine-binding profile, interacting with inflammatory chemokines of both the CXC and the CC subfamilies but not with homeostatic chemokines. Acts as a receptor for chemokines including CCL2, CCL5, CCL7, CCL11, CCL13, CCL14, CCL17, CXCL5, CXCL6, IL8/CXCL8, CXCL11, GRO, RANTES, MCP-1 and TARC. May regulate chemokine bioavailability and, consequently, leukocyte recruitment through two distinct mechanisms: when expressed in endothelial cells, it sustains the abluminal to luminal transcytosis of tissue-derived chemokines and their subsequent presentation to circulating leukocytes; when expressed in erythrocytes, serves as blood reservoir of cognate chemokines but also as a chemokine sink, buffering potential surges in plasma chemokine levels. The sequence is that of Atypical chemokine receptor 1 (ACKR1) from Papio hamadryas (Hamadryas baboon).